The primary structure comprises 239 residues: tRNA (guanine-N(1)-)-methyltransferase (239 aa).

S-adenosyl-L-methionine-binding positions include G108 and 127–132 (LGDYVL).

The protein belongs to the RNA methyltransferase TrmD family. Homodimer.

The protein resides in the cytoplasm. The catalysed reaction is guanosine(37) in tRNA + S-adenosyl-L-methionine = N(1)-methylguanosine(37) in tRNA + S-adenosyl-L-homocysteine + H(+). Functionally, specifically methylates guanosine-37 in various tRNAs. The polypeptide is tRNA (guanine-N(1)-)-methyltransferase (Streptococcus pneumoniae (strain JJA)).